The primary structure comprises 472 residues: Glutamate--tRNA ligase 1 (472 aa).

Positions 13–23 (PSPTGYLHIGG) match the 'HIGH' region motif. Zn(2+) is bound by residues Cys102, Cys104, Cys129, and Glu131. The 'KMSKS' region signature appears at 239-243 (RLSKR). Lys242 contributes to the ATP binding site.

The protein belongs to the class-I aminoacyl-tRNA synthetase family. Glutamate--tRNA ligase type 1 subfamily. In terms of assembly, monomer. Zn(2+) is required as a cofactor.

It is found in the cytoplasm. The catalysed reaction is tRNA(Glu) + L-glutamate + ATP = L-glutamyl-tRNA(Glu) + AMP + diphosphate. In terms of biological role, catalyzes the attachment of glutamate to tRNA(Glu) in a two-step reaction: glutamate is first activated by ATP to form Glu-AMP and then transferred to the acceptor end of tRNA(Glu). In Syntrophus aciditrophicus (strain SB), this protein is Glutamate--tRNA ligase 1.